We begin with the raw amino-acid sequence, 90 residues long: Protein S100-A6 (90 aa).

EF-hand domains are found at residues 12-47 (LIGI…IGSK) and 48-83 (LQDA…LAMI). Ca(2+) contacts are provided by T28 and E33. K40 bears the N6-acetyllysine mark. The residue at position 46 (S46) is a Phosphoserine. At K47 the chain carries N6-acetyllysine; alternate. K47 carries the N6-succinyllysine; alternate modification. Positions 61, 63, 65, 67, and 72 each coordinate Ca(2+).

Belongs to the S-100 family. As to quaternary structure, homodimer; head to tail assembly of 2 subunits. Interacts with CACYBP in a calcium-dependent manner. Interacts with ANXA2 and ANXA11 (via N-terminus). Interacts with SUGT1. Interacts with TP53; has higher affinity for TP53 that is phosphorylated on its N-terminal domain, and lower affinity for TP53 that is phosphorylated on its C-terminal domain. Interacts with tropomyosin. Interacts with FKBP4. Interacts with PPP5C (via TPR repeats); the interaction is calcium-dependent and modulates PPP5C activity. Interacts with TPPP; this interaction inhibits TPPP dimerization.

The protein localises to the nucleus envelope. It is found in the cytoplasm. Its subcellular location is the cell membrane. Its function is as follows. May function as calcium sensor and modulator, contributing to cellular calcium signaling. May function by interacting with other proteins, such as TPR-containing proteins, and indirectly play a role in many physiological processes such as the reorganization of the actin cytoskeleton and in cell motility. Binds 2 calcium ions. Calcium binding is cooperative. This chain is Protein S100-A6 (S100A6), found in Oryctolagus cuniculus (Rabbit).